An 87-amino-acid chain; its full sequence is uncharacterized protein (87 aa).

This is an uncharacterized protein from Saccharomyces cerevisiae (strain ATCC 204508 / S288c) (Baker's yeast).